The chain runs to 475 residues: Cytosolic non-specific dipeptidase (475 aa).

Residue A2 is modified to N-acetylalanine. Residue K9 is modified to N6-acetyllysine. S58 carries the post-translational modification Phosphoserine. H99 lines the Mn(2+) pocket. D101 is an active-site residue. D132 provides a ligand contact to Mn(2+). Residue E166 is the Proton acceptor of the active site. Residues 166 to 167 (EE), D195, and H228 contribute to the substrate site. The Mn(2+) site is built by E167 and D195. S299 is subject to Phosphoserine. Residues T330, R343, S417, and H445 each contribute to the substrate site. H445 serves as a coordination point for Mn(2+).

This sequence belongs to the peptidase M20A family. In terms of assembly, homodimer. It depends on Mn(2+) as a cofactor. Ubiquitously expressed with higher levels in kidney and liver (at protein level). Expressed in peripheral blood leukocytes. Expressed in gastric mucosa and down-regulated in gastric cancer mucosal tissues (at protein level). In terms of tissue distribution, broadly expressed in fetal tissues. Expressed in adult liver and placenta.

It localises to the cytoplasm. The catalysed reaction is Hydrolysis of dipeptides, preferentially hydrophobic dipeptides including prolyl amino acids.. The enzyme catalyses L-threonyl-L-threonine + H2O = 2 L-threonine. It carries out the reaction L-threonyl-L-serine + H2O = L-threonine + L-serine. It catalyses the reaction L-seryl-L-threonine + H2O = L-threonine + L-serine. The catalysed reaction is L-cysteinylglycine + H2O = L-cysteine + glycine. The enzyme catalyses L-alanyl-L-cysteine + H2O = L-cysteine + L-alanine. It carries out the reaction (S)-lactate + L-phenylalanine = N-[(S)-lactoyl]-L-phenylalanine + H2O. Inhibited by p-hydroxymercurybenzoate. The inhibitory concentration 50% (IC(50)) is 13 uM. Inhibited by bestatin. The inhibitory concentration 50% (IC(50)) is 7 nM at pH 9.5. Catalyzes the peptide bond hydrolysis in dipeptides, displaying a non-redundant activity toward threonyl dipeptides. Mediates threonyl dipeptide catabolism in a tissue-specific way. Has high dipeptidase activity toward cysteinylglycine, an intermediate metabolite in glutathione metabolism. Metabolizes N-lactoyl-amino acids, both through hydrolysis to form lactic acid and amino acids, as well as through their formation by reverse proteolysis. Plays a role in the regulation of cell cycle arrest and apoptosis. This Homo sapiens (Human) protein is Cytosolic non-specific dipeptidase.